Consider the following 129-residue polypeptide: UPF0102 protein Ctha_1382 (129 aa).

It belongs to the UPF0102 family.

The protein is UPF0102 protein Ctha_1382 of Chloroherpeton thalassium (strain ATCC 35110 / GB-78).